The sequence spans 245 residues: 6-carboxyhexanoate--CoA ligase (245 aa).

This sequence belongs to the BioW family. Homodimer. Mg(2+) serves as cofactor.

It carries out the reaction heptanedioate + ATP + CoA = 6-carboxyhexanoyl-CoA + AMP + diphosphate. The protein operates within metabolic intermediate metabolism; pimeloyl-CoA biosynthesis; pimeloyl-CoA from pimelate: step 1/1. Functionally, catalyzes the transformation of pimelate into pimeloyl-CoA with concomitant hydrolysis of ATP to AMP. The protein is 6-carboxyhexanoate--CoA ligase of Sulfurihydrogenibium azorense (strain DSM 15241 / OCM 825 / Az-Fu1).